A 781-amino-acid polypeptide reads, in one-letter code: Serine/threonine-protein kinase PLK4 (781 aa).

The Protein kinase domain maps to 14-268; it reads YEVQHLLGKG…LEQVLRHPFM (255 aa). Residues 20 to 28 and lysine 43 contribute to the ATP site; that span reads LGKGGFACV. Residue aspartate 139 is the Proton acceptor of the active site. Residues 397 to 514 form the Cryptic POLO box 1 (CPB1) domain; that stretch reads TEHISVPPLN…ARFVGLVKSK (118 aa). A disordered region spans residues 463 to 486; sequence QPDPGRGLPIQEQTSETHSSGTDN. Residues 473–486 are compositionally biased toward polar residues; it reads QEQTSETHSSGTDN. One can recognise a Cryptic POLO box 2 (CPB2) domain in the interval 515–618; it reads TPKVTYFSAL…GRRPVVEVLP (104 aa). Residues 672-751 form the POLO box domain; that stretch reads PIKRLNVPGV…LPQVQMKLRC (80 aa).

It belongs to the protein kinase superfamily. Ser/Thr protein kinase family. CDC5/Polo subfamily. In terms of assembly, homodimer. In terms of processing, ubiquitinated by the SCF(Slimb) ubiquitin ligase complex; leading to its degradation by the proteasome during interphase and regulating centriole number and ensuring the block to centriole reduplication.

It is found in the cytoplasm. The protein resides in the cytoskeleton. It localises to the microtubule organizing center. The protein localises to the centrosome. Its subcellular location is the centriole. The catalysed reaction is L-seryl-[protein] + ATP = O-phospho-L-seryl-[protein] + ADP + H(+). The enzyme catalyses L-threonyl-[protein] + ATP = O-phospho-L-threonyl-[protein] + ADP + H(+). Its function is as follows. Serine/threonine-protein kinase that plays a central role in centriole duplication. Able to trigger procentriole formation on the surface of the mother centriole cylinder, using mother centriole as a platform, leading to the recruitment of centriole biogenesis proteins such as sas-6. When overexpressed, it is able to induce centrosome amplification through the simultaneous generation of multiple procentrioles adjoining each parental centriole during S phase. Centrosome amplification following overexpression can initiate tumorigenesis, highlighting the importance of centrosome regulation in cancers. This chain is Serine/threonine-protein kinase PLK4 (SAK), found in Drosophila virilis (Fruit fly).